A 64-amino-acid chain; its full sequence is MARRDDLTGLGPLAGNNRSHALNITKRRWNLNLQKVKVKTDRGTLTVKVSARTIRTLRKLDLLA.

This sequence belongs to the bacterial ribosomal protein bL28 family.

This chain is Large ribosomal subunit protein bL28, found in Mycoplasmoides gallisepticum (strain R(low / passage 15 / clone 2)) (Mycoplasma gallisepticum).